Here is a 1341-residue protein sequence, read N- to C-terminus: MKRVFSLLEKSWLGAPIQFAWQKSSGNYLAVTGADYIVKIFDRHGQKRSEISLPGNCVTMDWDKDGDILAVIAEKSSCIYLWDANTNKTSQLDNGMRDQMSFLLWSKIGSFLAVGTIKGNLLIYNHQTSRKIPVLGKHTKKITCGCWNSENLLALGGEDKMITVSNQEGDTIRQTPVKSEPSDIKFSMSKTDERISSAENTISAVVGKKMLFLFHLNEPDNPVDLEFQQAYGNIVCYSWYGDGYIMIGFSRGTFLAISTHFPEVGQEIFKARDHKDNLTSVALSQTLNKAATCGDNCIKIHDLTELRDMYAIINLDDENKGLGTLSWTDDGQLLALSTQRGSLHVFLTKLPILGDACHTRIAYLTSLLEVTVANLIEGEPPITVSVDVEPTFVAVGLYHLAVGMNNRAWFYVLGENVVKKLKDVEYLGTVASICLHSDYAAALFEGKIQLHLIENEMLDAQEERETRLFPAVDDKCRILCHALTSDFLIYGTDTGIIHYFFIEDWQFVNDYRHPVGVKKLFPDPNGTRLVFIDEKSDGFVYCPVNDATYEIPDFSPTIKGVLWENWPMDKGVFIAYDDDKVYTYAFHKDTIQGSKVILAGSTKLPFSHKPLLLYNGELTCQTQSGKINSIYLSTHSFLGSMKDTEPTDLRQMLTQTLLLKRFSDAWDICKMLNDRTSWSELAKACLHHMEVEFAIRVSRTMGDVGTVMSLEQIKGIEDYNLLAGHLAMFTNDFNLAQDLYLASNCPVAALEMRRDLQHWDSALQLAKRLAPDQIPFISKEYAIQLEFTGDYVNALAHYEKGITGDNKEHDEVCLAGVAQMSIRMGDIRRGANQALKHPSRVLKRDCGAILENMKQFSEAAQLYEKGQYYDRAASVYIRCKNWAKVGELLPHVSSPKIHLQYAKAKEADGRYKEAVVAYENAKQWNSVIRIYLDHLNNPEKAVSIVRETQSLDGAKMVARFFLQLGDYGSAIQFLVLSKCNNEAFTLAQQHNKMEIYADIIGAEDTTNEDYQSIALYFEGEKRHFQAGKFFLLCGQYSRALKHFLKCPSSEDNVAIEMAIETVGQAKDELLTNQLIDHLMGESDGMPKDAKYLFRLYMALKQYREAARTAIIIAREEQSAGNYRNAHDVLFSMYAELKAQKIKIPSEMATNLMILHSYILVKIHVKSGDHMKGARMLIRVANNISKFPSHIVPILTSTVIECHRAGLKNSAFSFAAMLMRPEYRNKIDAKYKKKIEAMVRRPDTSETEEATTPCPFCQFLLPECELLCPGCKNNIPYCIATGRHMLKDDWTMCPHCGFPALYSEFKILLNSESTCPMCSERLNSSQLKKITDCSQYLRTEME.

WD repeat units follow at residues 11–51 (SWLG…RSEI), 52–92 (SLPG…TSQL), 95–134 (GMRD…KIPV), 137–175 (KHTK…IRQT), 273–311 (DHKD…DMYA), and 317–356 (DENK…LGDA). TPR repeat units lie at residues 736–769 (AQDL…AKRL), 775–808 (PFIS…DNKE), 840–873 (RVLK…DRAA), 895–928 (PKIH…NSVI), 951–984 (LDGA…NEAF), and 1020–1053 (EKRH…EDNV).

Component of the IFT complex A (IFT-A) complex. IFT-A complex is divided into a core subcomplex composed of IFT122:IFT140:WDR19 which is associated with TULP3 and a peripheral subcomplex composed of IFT43:WDR35:TTC21B. Interacts (via C-terminal region) with IFT122 (via C-terminal region). Interacts with BBS1. Interacts with TTC25. Tissue-specific expression of isoforms. Expressed in the prostate, testis, epididymis, submaxillary and salivary glands. Expressed in ependymal cells lining brain ventricles (at protein level).

The protein localises to the cell projection. Its subcellular location is the cilium. The protein resides in the cytoplasm. It localises to the cytoskeleton. It is found in the cilium basal body. The protein localises to the photoreceptor outer segment. Its subcellular location is the flagellum. As component of the IFT complex A (IFT-A), a complex required for retrograde ciliary transport and entry into cilia of G protein-coupled receptors (GPCRs), it is involved in cilia function and/or assembly. Essential for functional IFT-A assembly and ciliary entry of GPCRs. Associates with the BBSome complex to mediate ciliary transport. This chain is WD repeat-containing protein 19, found in Mus musculus (Mouse).